Reading from the N-terminus, the 2924-residue chain is Probable polyketide synthase 6 (2924 aa).

Residues 11–442 form the Ketosynthase family 3 (KS3) domain; the sequence is EKGVAIVGIG…GSNCCLLISE (432 aa). Catalysis depends on for beta-ketoacyl synthase activity residues cysteine 181, histidine 323, and histidine 362. The segment at 635-668 is acyl/malonyl transferase; sequence GVNPSFILGHSLGEISASYCSGMIDLDTFCYTVY. Serine 645 functions as the For acyl/malonyl transferase activity in the catalytic mechanism. The segment at 925–1047 is N-terminal hotdog fold; the sequence is IDHLGLSNSY…SNFQLLDHGN (123 aa). Residues 925–1210 form the PKS/mFAS DH domain; it reads IDHLGLSNSY…CKSLIPIKDS (286 aa). Histidine 959 functions as the Proton acceptor; for dehydratase activity in the catalytic mechanism. Residues 1064-1210 are C-terminal hotdog fold; sequence NLSKLTKNEL…CKSLIPIKDS (147 aa). Aspartate 1122 acts as the Proton donor; for dehydratase activity in catalysis. The 78-residue stretch at 2431 to 2508 folds into the Carrier domain; the sequence is TGNKNIDELF…ISIKMILNSL (78 aa). Serine 2468 bears the O-(pantetheine 4'-phosphoryl)serine mark. Residues 2551-2571 traverse the membrane as a helical segment; the sequence is KIILLTGTTGFLGGFLLFNML.

Pantetheine 4'-phosphate serves as cofactor.

Its subcellular location is the membrane. Its function is as follows. Probable polyketide synthase. In Dictyostelium discoideum (Social amoeba), this protein is Probable polyketide synthase 6 (pks6).